The chain runs to 550 residues: Arginine--tRNA ligase (550 aa).

The short motif at 130-140 is the 'HIGH' region element; the sequence is ANPTGPIHIGG.

This sequence belongs to the class-I aminoacyl-tRNA synthetase family. In terms of assembly, monomer.

The protein localises to the cytoplasm. The catalysed reaction is tRNA(Arg) + L-arginine + ATP = L-arginyl-tRNA(Arg) + AMP + diphosphate. This Mycolicibacterium gilvum (strain PYR-GCK) (Mycobacterium gilvum (strain PYR-GCK)) protein is Arginine--tRNA ligase.